The sequence spans 59 residues: UPF0434 protein Noc_2677 (59 aa).

The protein belongs to the UPF0434 family.

This Nitrosococcus oceani (strain ATCC 19707 / BCRC 17464 / JCM 30415 / NCIMB 11848 / C-107) protein is UPF0434 protein Noc_2677.